We begin with the raw amino-acid sequence, 200 residues long: Protein GrpE (200 aa).

Composition is skewed to acidic residues over residues 1–17 (MNEQPNEELQSEDEQFD) and 34–44 (AFAEAGEETRD). Residues 1–49 (MNEQPNEELQSEDEQFDPQETVSFEGETAANDEAFAEAGEETRDEEMTR) form a disordered region.

This sequence belongs to the GrpE family. As to quaternary structure, homodimer.

The protein localises to the cytoplasm. In terms of biological role, participates actively in the response to hyperosmotic and heat shock by preventing the aggregation of stress-denatured proteins, in association with DnaK and GrpE. It is the nucleotide exchange factor for DnaK and may function as a thermosensor. Unfolded proteins bind initially to DnaJ; upon interaction with the DnaJ-bound protein, DnaK hydrolyzes its bound ATP, resulting in the formation of a stable complex. GrpE releases ADP from DnaK; ATP binding to DnaK triggers the release of the substrate protein, thus completing the reaction cycle. Several rounds of ATP-dependent interactions between DnaJ, DnaK and GrpE are required for fully efficient folding. The polypeptide is Protein GrpE (Rhodopirellula baltica (strain DSM 10527 / NCIMB 13988 / SH1)).